We begin with the raw amino-acid sequence, 426 residues long: 3-phosphoshikimate 1-carboxyvinyltransferase (426 aa).

3-phosphoshikimate is bound by residues Lys-22, Ser-23, and Arg-27. Residue Lys-22 coordinates phosphoenolpyruvate. Gly-96 and Arg-124 together coordinate phosphoenolpyruvate. 3-phosphoshikimate is bound by residues Ser-170, Ser-171, Gln-172, Ser-198, Asp-314, Asn-337, and Lys-341. Gln-172 provides a ligand contact to phosphoenolpyruvate. Asp-314 (proton acceptor) is an active-site residue. Positions 345, 387, and 412 each coordinate phosphoenolpyruvate.

The protein belongs to the EPSP synthase family. Monomer.

It is found in the cytoplasm. It catalyses the reaction 3-phosphoshikimate + phosphoenolpyruvate = 5-O-(1-carboxyvinyl)-3-phosphoshikimate + phosphate. The protein operates within metabolic intermediate biosynthesis; chorismate biosynthesis; chorismate from D-erythrose 4-phosphate and phosphoenolpyruvate: step 6/7. In terms of biological role, catalyzes the transfer of the enolpyruvyl moiety of phosphoenolpyruvate (PEP) to the 5-hydroxyl of shikimate-3-phosphate (S3P) to produce enolpyruvyl shikimate-3-phosphate and inorganic phosphate. The chain is 3-phosphoshikimate 1-carboxyvinyltransferase from Shewanella oneidensis (strain ATCC 700550 / JCM 31522 / CIP 106686 / LMG 19005 / NCIMB 14063 / MR-1).